The following is a 541-amino-acid chain: Membrane protein insertase YidC (541 aa).

Residues 7 to 27 (ILLLALALVSFLLFQQWQVET) form a helical membrane-spanning segment. The segment covering 34 to 55 (TVSTVQQTHKNGDVPTSSTANS) has biased composition (polar residues). The interval 34–59 (TVSTVQQTHKNGDVPTSSTANSDAPV) is disordered. The next 4 helical transmembrane spans lie at 343–363 (SFIQ…TFIV), 418–438 (LGGC…YWAL), 456–476 (LSAQ…MFLI), and 495–515 (FIPV…VLYW).

The protein belongs to the OXA1/ALB3/YidC family. Type 1 subfamily. In terms of assembly, interacts with the Sec translocase complex via SecD. Specifically interacts with transmembrane segments of nascent integral membrane proteins during membrane integration.

The protein localises to the cell inner membrane. Functionally, required for the insertion and/or proper folding and/or complex formation of integral membrane proteins into the membrane. Involved in integration of membrane proteins that insert both dependently and independently of the Sec translocase complex, as well as at least some lipoproteins. Aids folding of multispanning membrane proteins. In Aliivibrio salmonicida (strain LFI1238) (Vibrio salmonicida (strain LFI1238)), this protein is Membrane protein insertase YidC.